The following is a 471-amino-acid chain: GTPase Der (471 aa).

EngA-type G domains are found at residues 3–166 and 177–350; these read PTLA…EPEA and IKLA…SSAT. Residues 9–16, 56–60, 118–121, 183–190, 230–234, and 295–298 contribute to the GTP site; these read GRPNVGKS, DTGGI, NKVD, DTAGV, and NKWD. One can recognise a KH-like domain in the interval 351–435; that stretch reads EKLNTNFLTK…PIRFEFKSSE (85 aa). The interval 432–471 is disordered; the sequence is KSSENPFAGRKNAMSKKPEHPSRRANSGGKSINRRPRPKS.

This sequence belongs to the TRAFAC class TrmE-Era-EngA-EngB-Septin-like GTPase superfamily. EngA (Der) GTPase family. Associates with the 50S ribosomal subunit.

Its function is as follows. GTPase that plays an essential role in the late steps of ribosome biogenesis. The chain is GTPase Der from Saccharophagus degradans (strain 2-40 / ATCC 43961 / DSM 17024).